The following is a 556-amino-acid chain: Formate--tetrahydrofolate ligase (556 aa).

65–72 (TPAGEGKT) serves as a coordination point for ATP.

It belongs to the formate--tetrahydrofolate ligase family.

The enzyme catalyses (6S)-5,6,7,8-tetrahydrofolate + formate + ATP = (6R)-10-formyltetrahydrofolate + ADP + phosphate. The protein operates within one-carbon metabolism; tetrahydrofolate interconversion. The polypeptide is Formate--tetrahydrofolate ligase (Agathobacter rectalis (strain ATCC 33656 / DSM 3377 / JCM 17463 / KCTC 5835 / VPI 0990) (Eubacterium rectale)).